We begin with the raw amino-acid sequence, 1608 residues long: Hemolysin (1608 aa).

Positions methionine 1–alanine 30 are cleaved as a signal peptide. Disordered regions lie at residues serine 296–arginine 315, lysine 452–glutamate 488, glutamate 716–glycine 737, alanine 971–glutamine 1030, alanine 1168–asparagine 1199, and proline 1437–leucine 1469. Polar residues-rich tracts occupy residues serine 303–asparagine 313 and arginine 460–serine 474. Composition is skewed to basic and acidic residues over residues glutamate 478–glutamate 488 and glutamate 716–arginine 726. Polar residues predominate over residues threonine 727–glycine 736. A compositionally biased stretch (basic and acidic residues) spans aspartate 977 to arginine 996. The segment covering threonine 1021–glutamine 1030 has biased composition (polar residues).

Its subcellular location is the cell outer membrane. Its function is as follows. Bacterial hemolysins are exotoxins that attack blood cell membranes and cause cell rupture by mechanisms not clearly defined. Functionally, cell-bound hemolysin, which releases heme-iron from erythrocytes by interaction with the erythrocyte membrane. ShlA requires ShlB function. The chain is Hemolysin (shlA) from Serratia marcescens.